We begin with the raw amino-acid sequence, 645 residues long: Aminopeptidase P1 (645 aa).

At Ser2 the chain carries N-acetylserine. A peptide is bound by residues Arg69 and His420. Mn(2+) contacts are provided by Asp440, Asp451, and His514. A peptide is bound by residues His514, His523, and Glu549. 2 residues coordinate Mn(2+): Glu549 and Glu563.

The protein belongs to the peptidase M24B family. As to quaternary structure, homodimer. Interacts with N-1-naphthylphthalamic acid (NPA). Mn(2+) is required as a cofactor. It depends on Zn(2+) as a cofactor. Post-translationally, glycosylated. Also present in a non-glycosylated form. As to expression, ubiquitous with preferential expression in 5 days-old seedlings, roots, flowers, inflorescences and rosette leaves (at protein levels).

It localises to the cytoplasm. The protein localises to the cell membrane. It is found in the microsome membrane. It catalyses the reaction Release of any N-terminal amino acid, including proline, that is linked to proline, even from a dipeptide or tripeptide.. Inhibited by EGTA and apstatin, and, to some extent, by the flavonoid kaempferol. In terms of biological role, catalyzes the removal of a penultimate prolyl residue from the N-termini of peptides, such as Arg-Pro-Pro. Aminopeptidase that binds to the auxin transport inhibitor N-1-naphthylphthalamic acid (NPA). May play a negative role in the regulation of PIN auxin transport proteins. The polypeptide is Aminopeptidase P1 (Arabidopsis thaliana (Mouse-ear cress)).